The chain runs to 624 residues: Chaperone protein HtpG (624 aa).

The segment at 1–336 (MKGQETRGFQ…SNDLPLNVSR (336 aa)) is a; substrate-binding. The tract at residues 337–552 (EILQDSTVTR…ADEMSTQMAK (216 aa)) is b. The c stretch occupies residues 553 to 624 (LFAAAGQAVP…IRRMNQLLVS (72 aa)).

Belongs to the heat shock protein 90 family. As to quaternary structure, homodimer.

It is found in the cytoplasm. Functionally, molecular chaperone. Has ATPase activity. The chain is Chaperone protein HtpG from Citrobacter koseri (strain ATCC BAA-895 / CDC 4225-83 / SGSC4696).